A 469-amino-acid chain; its full sequence is Glutamate--tRNA ligase 2 (469 aa).

Positions 10–20 (PSPTGFLHIGS) match the 'HIGH' region motif. Residues 239-243 (KLSKR) carry the 'KMSKS' region motif. K242 provides a ligand contact to ATP.

It belongs to the class-I aminoacyl-tRNA synthetase family. Glutamate--tRNA ligase type 1 subfamily. In terms of assembly, monomer.

It localises to the cytoplasm. The catalysed reaction is tRNA(Glu) + L-glutamate + ATP = L-glutamyl-tRNA(Glu) + AMP + diphosphate. Functionally, catalyzes the attachment of glutamate to tRNA(Glu) in a two-step reaction: glutamate is first activated by ATP to form Glu-AMP and then transferred to the acceptor end of tRNA(Glu). The protein is Glutamate--tRNA ligase 2 of Rickettsia typhi (strain ATCC VR-144 / Wilmington).